A 217-amino-acid chain; its full sequence is Transmembrane protein 247 (217 aa).

A compositionally biased stretch (basic and acidic residues) spans 1-10; the sequence is MATEDREMME. The disordered stretch occupies residues 1–87; sequence MATEDREMME…GPATTKGQAG (87 aa). A coiled-coil region spans residues 109–154; it reads RERDAEMELEKVRMEFELKRLKYLHEENERQRQHEEVMEQLQQQAT. The next 2 membrane-spanning stretches (helical) occupy residues 165-185 and 192-212; these read LLLPQNQFAMFLYCFIFIHII and IFFLFSKHYLFCIAAILLCLI.

Its subcellular location is the membrane. The sequence is that of Transmembrane protein 247 from Bos taurus (Bovine).